Here is a 626-residue protein sequence, read N- to C-terminus: MMANDAKPDVKTVQVLRDTANRLRIHSIRATCASGSGQLTSCCSAAEVVSVLFFHTMKYKQTDPEHPDNDRFILSRGHAAPILYAAWVEVGDISESDLLNLRKLHSDLERHPTPRLPFVDVATGSLGQGLGTACGMAYTGKYLDKASYRVFCLMGDGESSEGSVWEAFAFASHYNLDNLVAVFDVNRLGQSGPAPLEHGADIYQNCCEAFGWNTYLVDGHDVEALCQAFWQASQVKNKPTAIVAKTFKGRGIPNIEDAENWHGKPVPKERADAIVKLIESQIQTNENLIPKSPVEDSPQISITDIKMTSPPAYKVGDKIATQKTYGLALAKLGRANERVIVLSGDTMNSTFSEIFRKEHPERFIECIIAEQNMVSVALGCATRGRTIAFAGAFAAFFTRAFDQLRMGAISQANINLIGSHCGVSTGEDGVSQMALEDLAMFRSIPNCTVFYPSDAISTEHAIYLAANTKGMCFIRTSQPETAVIYTPQENFEIGQAKVVRHGVNDKVTVIGAGVTLHEALEAADHLSQQGISVRVIDPFTIKPLDAATIISSAKATGGRVITVEDHYREGGIGEAVCAAVSREPDILVHQLAVSGVPQRGKTSELLDMFGISTRHIIAAVTLTLMK.

Residues Ser-41, His-78, and 124–126 (GSL) each bind thiamine diphosphate. Residue Asp-156 participates in Mg(2+) binding. Residues Gly-157 and Asn-186 each coordinate thiamine diphosphate. 2 residues coordinate Mg(2+): Asn-186 and Leu-188. Positions 248 and 262 each coordinate thiamine diphosphate. Residues His-262 and Ser-349 each contribute to the substrate site. Residues Glu-370 and Phe-396 each contribute to the thiamine diphosphate site. Residue Glu-370 is the Proton donor of the active site. Positions 420 and 428 each coordinate substrate. Gln-432 serves as a coordination point for thiamine diphosphate.

This sequence belongs to the transketolase family. As to quaternary structure, homodimer. Requires Mg(2+) as cofactor. Ca(2+) serves as cofactor. The cofactor is Mn(2+). It depends on Co(2+) as a cofactor. Thiamine diphosphate is required as a cofactor. In terms of tissue distribution, overexpressed in hepatoma cancer cells.

It catalyses the reaction D-sedoheptulose 7-phosphate + D-glyceraldehyde 3-phosphate = aldehydo-D-ribose 5-phosphate + D-xylulose 5-phosphate. Plays an essential role in total transketolase activity and cell proliferation in cancer cells; after transfection with anti-TKTL1 siRNA, total transketolase activity dramatically decreases and proliferation was significantly inhibited in cancer cells. Plays a pivotal role in carcinogenesis. The chain is Transketolase-like protein 2 (TKTL2) from Homo sapiens (Human).